Here is a 340-residue protein sequence, read N- to C-terminus: Adenosine receptor A2b (340 aa).

Residues 1 to 6 lie on the Extracellular side of the membrane; that stretch reads MNTMKT. A helical transmembrane segment spans residues 7–31; the sequence is TYIVLELIIAVLSIAGNVLVCWAVA. Residues 32–41 are Cytoplasmic-facing; that stretch reads INSTLKNATN. The chain crosses the membrane as a helical span at residues 42-65; it reads YFLVSLAVADIAVGLLAIPFAITI. Topologically, residues 66 to 76 are extracellular; the sequence is SIGFQVDFHSC. Residues cysteine 76 and cysteine 171 are joined by a disulfide bond. Residues 77–99 form a helical membrane-spanning segment; sequence LFFACFVLVLTQSSIFSLLAVAI. Topologically, residues 100 to 119 are cytoplasmic; sequence DRYLAIKIPLRYNSLVTGKR. A helical membrane pass occupies residues 120-142; the sequence is ARGLIAVLWLLSFVIGLTPLMGW. The Extracellular portion of the chain corresponds to 143–178; the sequence is NKAMSGCPNSTNETGADHGAGHHGCFISCLFENVVT. Asparagine 151 and asparagine 154 each carry an N-linked (GlcNAc...) asparagine glycan. Glutamate 174 provides a ligand contact to adenosine. A helical transmembrane segment spans residues 179–203; that stretch reads MSYMVYFNFFGCVLLPLIIMLGIYI. The Cytoplasmic portion of the chain corresponds to 204–235; sequence KIFMVACKQLHQIELMGNSRTTLQKEVHAAKS. A helical membrane pass occupies residues 236-259; it reads LAIIVGLFAFCWLPLHILNCITHF. An adenosine-binding site is contributed by asparagine 254. The Extracellular segment spans residues 260 to 267; sequence HEEFSKSK. The helical transmembrane segment at 268 to 291 threads the bilayer; that stretch reads PEWVMYVAIILSHANSVINPIIYA. Positions 279 and 280 each coordinate adenosine. Residues 292-340 are Cytoplasmic-facing; the sequence is YRIRDFRYTFHKIISKILCKTDDFPKCTTDNNQHLTVTNVNAPAASVTI. Cysteine 310 carries the S-palmitoyl cysteine lipid modification.

The protein belongs to the G-protein coupled receptor 1 family.

The protein resides in the cell membrane. Functionally, receptor for adenosine. The activity of this receptor is mediated by G proteins which activate adenylyl cyclase. The chain is Adenosine receptor A2b (ADORA2B) from Gallus gallus (Chicken).